We begin with the raw amino-acid sequence, 292 residues long: Elongation factor Ts (292 aa).

Positions 79-82 are involved in Mg(2+) ion dislocation from EF-Tu; sequence TDFV.

It belongs to the EF-Ts family.

The protein localises to the cytoplasm. In terms of biological role, associates with the EF-Tu.GDP complex and induces the exchange of GDP to GTP. It remains bound to the aminoacyl-tRNA.EF-Tu.GTP complex up to the GTP hydrolysis stage on the ribosome. The protein is Elongation factor Ts of Xanthomonas campestris pv. campestris (strain ATCC 33913 / DSM 3586 / NCPPB 528 / LMG 568 / P 25).